We begin with the raw amino-acid sequence, 314 residues long: Hydroxyacyl-coenzyme A dehydrogenase, mitochondrial (314 aa).

The N-terminal 12 residues, methionine 1 to methionine 12, are a transit peptide targeting the mitochondrion. Residues glycine 34–glycine 39 and aspartate 57 each bind NAD(+). Residue serine 73 coordinates CoA. Residue lysine 75 is modified to N6-acetyllysine. Lysine 80 serves as a coordination point for CoA. Residue lysine 80 is modified to N6-succinyllysine. 2 positions are modified to N6-acetyllysine; alternate: lysine 81 and lysine 87. N6-succinyllysine; alternate occurs at positions 81 and 87. Glutamate 122 contacts NAD(+). Lysine 125 bears the N6-acetyllysine mark. Lysine 127 is an NAD(+) binding site. Lysine 127 bears the N6-(2-hydroxyisobutyryl)lysine mark. At lysine 136 the chain carries N6-acetyllysine; alternate. Lysine 136 bears the N6-succinyllysine; alternate mark. Positions 149 and 173 each coordinate NAD(+). A CoA-binding site is contributed by serine 149. N6-acetyllysine is present on lysine 179. Residues lysine 185, lysine 192, and lysine 202 each carry the N6-acetyllysine; alternate modification. N6-succinyllysine; alternate is present on residues lysine 185, lysine 192, and lysine 202. An N6-succinyllysine modification is found at lysine 206. N6-acetyllysine; alternate is present on residues lysine 212 and lysine 241. N6-succinyllysine; alternate is present on residues lysine 212 and lysine 241. Residue lysine 305 participates in NAD(+) binding. Residue lysine 312 is modified to N6-acetyllysine; alternate. Position 312 is an N6-succinyllysine; alternate (lysine 312).

The protein belongs to the 3-hydroxyacyl-CoA dehydrogenase family. In terms of assembly, homodimer. Interacts with GLUD1; this interaction inhibits the activation of glutamate dehydrogenase 1 (GLUD1). In terms of processing, succinylation at Lys-81, adjacent to a coenzyme A binding site. Desuccinylated by SIRT5. As to expression, expressed in liver, kidney, brain, and pancreatic islets.

The protein localises to the mitochondrion matrix. The protein resides in the nucleus. It is found in the cytoplasm. Its subcellular location is the cytosol. It catalyses the reaction a (3S)-3-hydroxyacyl-CoA + NAD(+) = a 3-oxoacyl-CoA + NADH + H(+). It carries out the reaction (3S)-3-hydroxybutanoyl-CoA + NAD(+) = acetoacetyl-CoA + NADH + H(+). The enzyme catalyses (3S)-hydroxydecanoyl-CoA + NAD(+) = 3-oxodecanoyl-CoA + NADH + H(+). The catalysed reaction is (3S)-hydroxyhexadecanoyl-CoA + NAD(+) = 3-oxohexadecanoyl-CoA + NADH + H(+). It participates in lipid metabolism; fatty acid beta-oxidation. In terms of biological role, mitochondrial fatty acid beta-oxidation enzyme that catalyzes the third step of the beta-oxidation cycle for medium and short-chain 3-hydroxy fatty acyl-CoAs (C4 to C10). Plays a role in the control of insulin secretion by inhibiting the activation of glutamate dehydrogenase 1 (GLUD1), an enzyme that has an important role in regulating amino acid-induced insulin secretion. Plays a role in the maintenance of normal spermatogenesis through the reduction of fatty acid accumulation in the testes. Inhibits cell proliferation. The protein is Hydroxyacyl-coenzyme A dehydrogenase, mitochondrial (Hadh) of Mus musculus (Mouse).